Consider the following 482-residue polypeptide: ADP-ribosylation factor GTPase-activating protein effector protein 1 (482 aa).

Residues 116–156 (QHKSTHSHHINHQTHPIHSSSSNSNSNNRIPTKTDSSKQHT) are disordered. The span at 118–127 (KSTHSHHINH) shows a compositional bias: basic residues. Positions 134–143 (SSSSNSNSNN) are enriched in low complexity. The Arf-GAP domain occupies 170–297 (DELLSIVRKI…FVIDSNQGRE (128 aa)). The C4-type zinc finger occupies 186–210 (CCDCGSTATVEWVSINLLCILCIKC).

The protein localises to the cytoplasm. Its function is as follows. GTPase-activating protein (GAP) for the ADP ribosylation factors ARF1 and ARF2. May be involved in the endocytic pathway. The sequence is that of ADP-ribosylation factor GTPase-activating protein effector protein 1 (AGE1) from Saccharomyces cerevisiae (strain ATCC 204508 / S288c) (Baker's yeast).